The chain runs to 898 residues: Serine/threonine-protein kinase PKH3 (898 aa).

A Protein kinase domain is found at 11 to 293 (FIFKEELGHG…LEQIKRHPYF (283 aa)). Residues 17 to 25 (LGHGSYSTV) and Lys41 each bind ATP. The Proton acceptor role is filled by Asp138. 2 disordered regions span residues 435–484 (PPKV…PSTE) and 675–850 (DSKA…EKYS). Positions 459–468 (PLQTSSIPQK) are enriched in polar residues. Residues 469–483 (LSTSSASSALSAPST) are compositionally biased toward low complexity. Ser696 carries the phosphoserine modification. Over residues 697–721 (IGNNVTTLSYTAKNGSQNNAPQNDN) the composition is skewed to polar residues. Residues 723–738 (GEEKPFRIPSSTKDRP) show a composition bias toward basic and acidic residues. 3 stretches are compositionally biased toward polar residues: residues 740–758 (ANSTPSSRHPRVLSSNNAG), 771–782 (SAPSTNTYTNGS), and 789–803 (RPSTNVGNNKHNILT). Position 753 is a phosphoserine (Ser753). A compositionally biased stretch (low complexity) spans 804 to 817 (SKKQGSSVFSPSSS). Positions 818–831 (TTKPQIKTTGYRQP) are enriched in polar residues. Phosphoserine is present on Ser871.

The protein belongs to the protein kinase superfamily. Ser/Thr protein kinase family.

It catalyses the reaction L-seryl-[protein] + ATP = O-phospho-L-seryl-[protein] + ADP + H(+). The enzyme catalyses L-threonyl-[protein] + ATP = O-phospho-L-threonyl-[protein] + ADP + H(+). Its function is as follows. Serine/threonine-protein kinase which may phosphorylate the same targets substrates as PKH1 and PKH2, 2 upstream activators of PKC1. In Saccharomyces cerevisiae (strain ATCC 204508 / S288c) (Baker's yeast), this protein is Serine/threonine-protein kinase PKH3 (PKH3).